We begin with the raw amino-acid sequence, 251 residues long: Regulator of G-protein signaling 9-binding protein B (251 aa).

Residues 1–230 (MPLQNVKVAD…NSKGCCSDGQ (230 aa)) lie on the Cytoplasmic side of the membrane. Coiled-coil stretches lie at residues 52-94 (HLRD…ELER) and 158-187 (ANKA…MKVN). The chain crosses the membrane as a helical; Anchor for type IV membrane protein span at residues 231-250 (LIVFLLLCGTALVAITLYSI). Residue leucine 251 is a topological domain, extracellular.

Belongs to the RGS7BP/RGS9BP family.

It localises to the membrane. Regulator of G protein-coupled receptor (GPCR) signaling. Probably acts by regulating the activity of some 'R7' family protein (RGS6, RGS7, RGS9 and/or RGS11). The protein is Regulator of G-protein signaling 9-binding protein B (rgs9bp-b) of Xenopus laevis (African clawed frog).